Consider the following 575-residue polypeptide: SH2B adapter protein 3 (575 aa).

3 disordered regions span residues 1 to 23 (MNGP…AAAP), 83 to 136 (RAPG…CSFQ), and 150 to 176 (SAGE…PARP). At S13 the chain carries Phosphoserine. Over residues 83 to 93 (RAPGRDYRDTG) the composition is skewed to basic and acidic residues. The span at 95–104 (GPPAKAEASP) shows a compositional bias: low complexity. Residues S103, S120, and S150 each carry the phosphoserine modification. Residues 152-174 (GELPAAHTAAAPGTPGEAAETPA) show a composition bias toward low complexity. The PH domain maps to 194-307 (EALKEAVLRY…WMAELSECTG (114 aa)). The interval 322 to 346 (ALEPSTSSSPRGSTDSLNQGASPGG) is disordered. Residues 325-337 (PSTSSSPRGSTDS) are compositionally biased toward low complexity. At S330 the chain carries Phosphoserine. The SH2 domain occupies 364–462 (WFHGPISRVK…ACDVRLSSYV (99 aa)). 2 disordered regions span residues 503–525 (SSGC…PEQI) and 546–575 (PVNR…YTPL).

This sequence belongs to the SH2B adapter family. As to quaternary structure, binds to the tyrosine-phosphorylated TCR zeta chain via its SH2 domain. Tyrosine phosphorylated by LCK. Preferentially expressed by lymphoid cell lines.

In terms of biological role, links T-cell receptor activation signal to phospholipase C-gamma-1, GRB2 and phosphatidylinositol 3-kinase. The polypeptide is SH2B adapter protein 3 (SH2B3) (Homo sapiens (Human)).